Here is a 429-residue protein sequence, read N- to C-terminus: Probable beta-1,3-galactosyl-O-glycosyl-glycoprotein beta-1,6-N-acetylglucosaminyltransferase 7 (429 aa).

The Cytoplasmic portion of the chain corresponds to 1 to 8; sequence MSQLRATK. Residues 9–25 form a helical; Signal-anchor for type II membrane protein membrane-spanning segment; that stretch reads PGILVCAAIGIFVFLYL. The Extracellular portion of the chain corresponds to 26–429; it reads RNPTSEDPEE…ESHLNRRLNP (404 aa). 4 disulfide bridges follow: Cys-53-Cys-205, Cys-139-Cys-354, Cys-160-Cys-187, and Cys-363-Cys-394. N-linked (GlcNAc...) asparagine glycosylation occurs at Asn-87. An N-linked (GlcNAc...) asparagine glycan is attached at Asn-272.

The protein belongs to the glycosyltransferase 14 family.

It localises to the golgi apparatus membrane. It participates in protein modification; protein glycosylation. Functionally, probable glycosyltransferase. The polypeptide is Probable beta-1,3-galactosyl-O-glycosyl-glycoprotein beta-1,6-N-acetylglucosaminyltransferase 7 (Sus scrofa (Pig)).